The primary structure comprises 93 residues: Acylphosphatase (93 aa).

The 88-residue stretch at 4–91 (TLHLVIHGRV…PAGTGFRVAA (88 aa)) folds into the Acylphosphatase-like domain. Active-site residues include Arg-19 and Asn-37.

This sequence belongs to the acylphosphatase family.

It carries out the reaction an acyl phosphate + H2O = a carboxylate + phosphate + H(+). The polypeptide is Acylphosphatase (acyP) (Azorhizobium caulinodans (strain ATCC 43989 / DSM 5975 / JCM 20966 / LMG 6465 / NBRC 14845 / NCIMB 13405 / ORS 571)).